The primary structure comprises 215 residues: Pyrrolidone-carboxylate peptidase (215 aa).

Residues E80, C143, and H167 contribute to the active site.

This sequence belongs to the peptidase C15 family. Homotetramer.

Its subcellular location is the cytoplasm. The enzyme catalyses Release of an N-terminal pyroglutamyl group from a polypeptide, the second amino acid generally not being Pro.. Removes 5-oxoproline from various penultimate amino acid residues except L-proline. The polypeptide is Pyrrolidone-carboxylate peptidase (Bacillus cereus (strain ATCC 10987 / NRS 248)).